A 131-amino-acid polypeptide reads, in one-letter code: Type 3 secretion system pilotin (131 aa).

Positions methionine 1 to glycine 15 are cleaved as a signal peptide. A lipid anchor (N-palmitoyl cysteine) is attached at cysteine 16. Cysteine 16 is lipidated: S-diacylglycerol cysteine.

This sequence belongs to the ExsB/YscW family. In terms of assembly, interacts with YscC/SctC.

It localises to the cell outer membrane. Functionally, involved in the synthesis of the type III secretion system (T3SS), also called injectisome, which is used to inject bacterial effector proteins into eukaryotic host cells. Pilot protein that is required for the proper localization of the secretin YscC/SctC in the outer membrane. Also required for efficient oligomerization of YscC/SctC and stabilization of the oligomers. This Yersinia enterocolitica protein is Type 3 secretion system pilotin.